We begin with the raw amino-acid sequence, 469 residues long: Neuraminidase (469 aa).

The Intravirion portion of the chain corresponds to 1–6 (MNTNQR). A helical membrane pass occupies residues 7 to 27 (IITIGTICLIVGIISLLLQIG). The segment at 11–33 (GTICLIVGIISLLLQIGNIISLW) is involved in apical transport and lipid raft association. Residues 28-469 (NIISLWISHS…GADLPFTIDK (442 aa)) lie on the Virion surface side of the membrane. The tract at residues 36–90 (HSIQTREKNHPEVCNQSVITYENNTWVNQTYVNISNANIVAGQGVTSIILAGNSP) is hypervariable stalk region. Asn50, Asn58, Asn63, and Asn68 each carry an N-linked (GlcNAc...) asparagine; by host glycan. A head of neuraminidase region spans residues 91-469 (LCPISGWAIY…GADLPFTIDK (379 aa)). Cystine bridges form between Cys92–Cys417, Cys124–Cys129, Cys184–Cys231, Cys233–Cys238, Cys279–Cys292, Cys281–Cys290, Cys318–Cys335, and Cys421–Cys446. Arg118 contributes to the substrate binding site. Asn146 is a glycosylation site (N-linked (GlcNAc...) asparagine; by host). The Proton donor/acceptor role is filled by Asp151. Arg152 contributes to the substrate binding site. A glycan (N-linked (GlcNAc...) asparagine; by host) is linked at Asn235. 277–278 (EE) is a binding site for substrate. Substrate is bound at residue Arg293. Ca(2+) contacts are provided by Asp294, Asp324, and Asn344. Residue Arg368 coordinates substrate. Residue Tyr402 is the Nucleophile of the active site. N-linked (GlcNAc...) asparagine; by host glycosylation is present at Asn454.

Belongs to the glycosyl hydrolase 34 family. In terms of assembly, homotetramer. It depends on Ca(2+) as a cofactor. N-glycosylated.

It is found in the virion membrane. The protein localises to the host apical cell membrane. It carries out the reaction Hydrolysis of alpha-(2-&gt;3)-, alpha-(2-&gt;6)-, alpha-(2-&gt;8)- glycosidic linkages of terminal sialic acid residues in oligosaccharides, glycoproteins, glycolipids, colominic acid and synthetic substrates.. With respect to regulation, inhibited by the neuraminidase inhibitors zanamivir (Relenza) and oseltamivir (Tamiflu). These drugs interfere with the release of progeny virus from infected cells and are effective against all influenza strains. Resistance to neuraminidase inhibitors is quite rare. In terms of biological role, catalyzes the removal of terminal sialic acid residues from viral and cellular glycoconjugates. Cleaves off the terminal sialic acids on the glycosylated HA during virus budding to facilitate virus release. Additionally helps virus spread through the circulation by further removing sialic acids from the cell surface. These cleavages prevent self-aggregation and ensure the efficient spread of the progeny virus from cell to cell. Otherwise, infection would be limited to one round of replication. Described as a receptor-destroying enzyme because it cleaves a terminal sialic acid from the cellular receptors. May facilitate viral invasion of the upper airways by cleaving the sialic acid moieties on the mucin of the airway epithelial cells. Likely to plays a role in the budding process through its association with lipid rafts during intracellular transport. May additionally display a raft-association independent effect on budding. Plays a role in the determination of host range restriction on replication and virulence. Sialidase activity in late endosome/lysosome traffic seems to enhance virus replication. This Influenza A virus (strain A/Swine/Wisconsin/1/1967 H1N1) protein is Neuraminidase.